A 108-amino-acid chain; its full sequence is Glutaredoxin 4 (108 aa).

The Glutaredoxin domain maps to Phe4 to Tyr106. Glutathione is bound at residue Lys21. Cys29 lines the [2Fe-2S] cluster pocket. Residues Arg58, Phe70, and Cys83–Ser84 contribute to the glutathione site.

This sequence belongs to the glutaredoxin family. Monothiol subfamily. Homodimer.

It is found in the cytoplasm. In terms of biological role, monothiol glutaredoxin involved in the biogenesis of iron-sulfur clusters. The chain is Glutaredoxin 4 (grxD) from Buchnera aphidicola subsp. Acyrthosiphon pisum (strain APS) (Acyrthosiphon pisum symbiotic bacterium).